Here is a 674-residue protein sequence, read N- to C-terminus: DNA-directed RNA polymerase subunit beta' (674 aa).

The Zn(2+) site is built by cysteine 69, cysteine 71, cysteine 87, and cysteine 90. Mg(2+) is bound by residues aspartate 494, aspartate 496, and aspartate 498.

This sequence belongs to the RNA polymerase beta' chain family. RpoC1 subfamily. As to quaternary structure, in plastids the minimal PEP RNA polymerase catalytic core is composed of four subunits: alpha, beta, beta', and beta''. When a (nuclear-encoded) sigma factor is associated with the core the holoenzyme is formed, which can initiate transcription. Mg(2+) serves as cofactor. Requires Zn(2+) as cofactor.

The protein localises to the plastid. The protein resides in the chloroplast. It carries out the reaction RNA(n) + a ribonucleoside 5'-triphosphate = RNA(n+1) + diphosphate. Functionally, DNA-dependent RNA polymerase catalyzes the transcription of DNA into RNA using the four ribonucleoside triphosphates as substrates. This is DNA-directed RNA polymerase subunit beta' from Psilotum nudum (Whisk fern).